Consider the following 330-residue polypeptide: Phosphate acyltransferase (330 aa).

This sequence belongs to the PlsX family. Homodimer. Probably interacts with PlsY.

It is found in the cytoplasm. It catalyses the reaction a fatty acyl-[ACP] + phosphate = an acyl phosphate + holo-[ACP]. It participates in lipid metabolism; phospholipid metabolism. Catalyzes the reversible formation of acyl-phosphate (acyl-PO(4)) from acyl-[acyl-carrier-protein] (acyl-ACP). This enzyme utilizes acyl-ACP as fatty acyl donor, but not acyl-CoA. The polypeptide is Phosphate acyltransferase (Streptococcus pneumoniae (strain P1031)).